The sequence spans 462 residues: Squalene synthase ERG9 (462 aa).

Residues 406–426 (AVVLFGVVIAALVCISGLMLG) traverse the membrane as a helical segment.

It belongs to the phytoene/squalene synthase family. Requires Mg(2+) as cofactor.

Its subcellular location is the endoplasmic reticulum membrane. The protein localises to the microsome. It catalyses the reaction 2 (2E,6E)-farnesyl diphosphate + NADPH + H(+) = squalene + 2 diphosphate + NADP(+). The catalysed reaction is 2 (2E,6E)-farnesyl diphosphate + NADH + H(+) = squalene + 2 diphosphate + NAD(+). It participates in terpene metabolism; lanosterol biosynthesis; lanosterol from farnesyl diphosphate: step 1/3. Its pathway is steroid metabolism; ergosterol biosynthesis. In terms of biological role, squalene synthase; part of the third module of ergosterol biosynthesis pathway that includes the late steps of the pathway. ERG9 produces squalene from 2 farnesyl pyrophosphate moieties. The third module or late pathway involves the ergosterol synthesis itself through consecutive reactions that mainly occur in the endoplasmic reticulum (ER) membrane. Firstly, the squalene synthase ERG9 catalyzes the condensation of 2 farnesyl pyrophosphate moieties to form squalene, which is the precursor of all steroids. Squalene synthase is crucial for balancing the incorporation of farnesyl diphosphate (FPP) into sterol and nonsterol isoprene synthesis. Secondly, squalene is converted into lanosterol by the consecutive action of the squalene epoxidase ERG1 and the lanosterol synthase ERG7. Then, the delta(24)-sterol C-methyltransferase ERG6 methylates lanosterol at C-24 to produce eburicol. Eburicol is the substrate of the sterol 14-alpha demethylase encoded by CYP51A, CYP51B and CYP51C, to yield 4,4,24-trimethyl ergosta-8,14,24(28)-trienol. CYP51B encodes the enzyme primarily responsible for sterol 14-alpha-demethylation, and plays an essential role in ascospore formation. CYP51A encodes an additional sterol 14-alpha-demethylase, induced on ergosterol depletion and responsible for the intrinsic variation in azole sensitivity. The third CYP51 isoform, CYP51C, does not encode a sterol 14-alpha-demethylase, but is required for full virulence on host wheat ears. The C-14 reductase ERG24 then reduces the C14=C15 double bond which leads to 4,4-dimethylfecosterol. A sequence of further demethylations at C-4, involving the C-4 demethylation complex containing the C-4 methylsterol oxidases ERG25, the sterol-4-alpha-carboxylate 3-dehydrogenase ERG26 and the 3-keto-steroid reductase ERG27, leads to the production of fecosterol via 4-methylfecosterol. ERG28 has a role as a scaffold to help anchor ERG25, ERG26 and ERG27 to the endoplasmic reticulum. The C-8 sterol isomerase ERG2 then catalyzes the reaction which results in unsaturation at C-7 in the B ring of sterols and thus converts fecosterol to episterol. The sterol-C5-desaturases ERG3A and ERG3BB then catalyze the introduction of a C-5 double bond in the B ring to produce 5-dehydroepisterol. The C-22 sterol desaturases ERG5A and ERG5B further convert 5-dehydroepisterol into ergosta-5,7,22,24(28)-tetraen-3beta-ol by forming the C-22(23) double bond in the sterol side chain. Finally, ergosta-5,7,22,24(28)-tetraen-3beta-ol is substrate of the C-24(28) sterol reductase ERG4 to produce ergosterol. This is Squalene synthase ERG9 from Gibberella zeae (strain ATCC MYA-4620 / CBS 123657 / FGSC 9075 / NRRL 31084 / PH-1) (Wheat head blight fungus).